A 665-amino-acid chain; its full sequence is Transketolase (665 aa).

A substrate-binding site is contributed by histidine 26. Thiamine diphosphate is bound by residues histidine 66 and 114 to 116 (GPL). The interval 94–114 (NSKTPGHPETGETPGVETTTG) is disordered. A compositionally biased stretch (low complexity) spans 97 to 114 (TPGHPETGETPGVETTTG). Aspartate 155 lines the Mg(2+) pocket. Positions 156 and 185 each coordinate thiamine diphosphate. The Mg(2+) site is built by asparagine 185 and isoleucine 187. Residues histidine 261, arginine 358, and serine 385 each coordinate substrate. Histidine 261 provides a ligand contact to thiamine diphosphate. Residue glutamate 411 is the Proton donor of the active site. A thiamine diphosphate-binding site is contributed by phenylalanine 437. Substrate contacts are provided by histidine 461, aspartate 469, and arginine 520.

The protein belongs to the transketolase family. In terms of assembly, homodimer. Mg(2+) is required as a cofactor. The cofactor is Ca(2+). Mn(2+) serves as cofactor. It depends on Co(2+) as a cofactor. Requires thiamine diphosphate as cofactor.

It carries out the reaction D-sedoheptulose 7-phosphate + D-glyceraldehyde 3-phosphate = aldehydo-D-ribose 5-phosphate + D-xylulose 5-phosphate. Functionally, catalyzes the transfer of a two-carbon ketol group from a ketose donor to an aldose acceptor, via a covalent intermediate with the cofactor thiamine pyrophosphate. This chain is Transketolase (tkt), found in Buchnera aphidicola subsp. Acyrthosiphon pisum (strain APS) (Acyrthosiphon pisum symbiotic bacterium).